The sequence spans 127 residues: D-ribose pyranase (127 aa).

The active-site Proton donor is H20. Substrate is bound by residues D28, H94, and 116–118; that span reads YSN.

The protein belongs to the RbsD / FucU family. RbsD subfamily. Homodecamer.

The protein resides in the cytoplasm. It carries out the reaction beta-D-ribopyranose = beta-D-ribofuranose. It participates in carbohydrate metabolism; D-ribose degradation; D-ribose 5-phosphate from beta-D-ribopyranose: step 1/2. Its function is as follows. Catalyzes the interconversion of beta-pyran and beta-furan forms of D-ribose. The polypeptide is D-ribose pyranase (Cutibacterium acnes (strain DSM 16379 / KPA171202) (Propionibacterium acnes)).